The chain runs to 441 residues: Glutamyl-tRNA reductase (441 aa).

Residues Thr64–Arg67, Ser123, Glu128–Gln130, and Gln134 contribute to the substrate site. Cys65 (nucleophile) is an active-site residue. Gly203 to Ile208 serves as a coordination point for NADP(+).

This sequence belongs to the glutamyl-tRNA reductase family. As to quaternary structure, homodimer.

The catalysed reaction is (S)-4-amino-5-oxopentanoate + tRNA(Glu) + NADP(+) = L-glutamyl-tRNA(Glu) + NADPH + H(+). Its pathway is porphyrin-containing compound metabolism; protoporphyrin-IX biosynthesis; 5-aminolevulinate from L-glutamyl-tRNA(Glu): step 1/2. Its function is as follows. Catalyzes the NADPH-dependent reduction of glutamyl-tRNA(Glu) to glutamate 1-semialdehyde (GSA). This chain is Glutamyl-tRNA reductase, found in Burkholderia pseudomallei (strain K96243).